Here is a 452-residue protein sequence, read N- to C-terminus: METEVNVAEISALDYEGRGVTKVGGKTVFIKGALPSERVGFRIVRQKKQFDEAEAVAIFKVSDERTVPQCRYFERCGGCSLQHISPAAQVAFKQRMMEEQLERIGKVKPKQILLPIYGHVWHYRDRARFSVSLDKLCRLKLGFQAKKTNDVVDISSCMLLPKPVSDKLSAIRGLLQDLAEEGSVARFAEFYRGSEITVLNIAFKSKLRQNEENRIRQWFDSELSDGWQVWLQIEGGVSQPFYPKTDKTLKYTLPEFGIEMPFRPGDFTQINTDTNRLMVSRVVKMLDIRRGERIADLFCGLGNFSLPMAKSGADVVGIEGAENLVRRARQNARLNGCDRQTDFIAANLFDCTEKTVASWERFDKMLIDPPRSGAYEVVKSLHTPYLPQKIVYVSCNPSTLARDAGVLVEKGYMLSQAGIMNMFAQTSHTESVAVFDLLPQTGKNFLKIKGKD.

One can recognise a TRAM domain in the interval 1–57 (METEVNVAEISALDYEGRGVTKVGGKTVFIKGALPSERVGFRIVRQKKQFDEAEAVA). Residues Cys70, Cys76, Cys79, and Cys157 each coordinate [4Fe-4S] cluster. Residues Gln269, Phe298, Asn303, Glu319, Asn347, and Asp368 each coordinate S-adenosyl-L-methionine. The active-site Nucleophile is the Cys395.

Belongs to the class I-like SAM-binding methyltransferase superfamily. RNA M5U methyltransferase family. RlmD subfamily.

The enzyme catalyses uridine(1939) in 23S rRNA + S-adenosyl-L-methionine = 5-methyluridine(1939) in 23S rRNA + S-adenosyl-L-homocysteine + H(+). Its function is as follows. Catalyzes the formation of 5-methyl-uridine at position 1939 (m5U1939) in 23S rRNA. The protein is 23S rRNA (uracil(1939)-C(5))-methyltransferase RlmD of Neisseria lactamica (strain 020-06).